The primary structure comprises 127 residues: Small ribosomal subunit protein uS11 (127 aa).

This sequence belongs to the universal ribosomal protein uS11 family. In terms of assembly, part of the 30S ribosomal subunit. Interacts with proteins S7 and S18. Binds to IF-3.

Its function is as follows. Located on the platform of the 30S subunit, it bridges several disparate RNA helices of the 16S rRNA. Forms part of the Shine-Dalgarno cleft in the 70S ribosome. This chain is Small ribosomal subunit protein uS11, found in Chlorobium limicola (strain DSM 245 / NBRC 103803 / 6330).